A 77-amino-acid polypeptide reads, in one-letter code: UPF0154 protein LCK_00994 (77 aa).

A helical membrane pass occupies residues 5–25 (FGILIFVLGLVIGLVIGFFVA). The segment at 50-77 (SMGQKPSQKKLNQMMAQMKQQSEQSQKK) is disordered.

The protein belongs to the UPF0154 family.

It localises to the cell membrane. This chain is UPF0154 protein LCK_00994, found in Leuconostoc citreum (strain KM20).